We begin with the raw amino-acid sequence, 134 residues long: Acyl carrier protein, chloroplastic (134 aa).

A chloroplast-targeting transit peptide spans 1–51; that stretch reads MSTTFCSSVSMQATSLAATTRISFQKPALVSRTNLSFNLSRSIPTRLSVSC. The 76-residue stretch at 55–130 folds into the Carrier domain; the sequence is PETVEKVSKI…EAAELIDELV (76 aa). Serine 90 bears the O-(pantetheine 4'-phosphoryl)serine mark.

It belongs to the acyl carrier protein (ACP) family. In terms of processing, 4'-phosphopantetheine is transferred from CoA to a specific serine of apo-ACP by acpS. This modification is essential for activity because fatty acids are bound in thioester linkage to the sulfhydryl of the prosthetic group. As to expression, seed.

Its subcellular location is the plastid. It localises to the chloroplast. It functions in the pathway lipid metabolism; fatty acid biosynthesis. Carrier of the growing fatty acid chain in fatty acid biosynthesis. This chain is Acyl carrier protein, chloroplastic (ACL1.A1), found in Brassica napus (Rape).